We begin with the raw amino-acid sequence, 379 residues long: Cytochrome b (379 aa).

The next 4 membrane-spanning stretches (helical) occupy residues Phe-33 to Met-53, Trp-77 to Ile-98, Trp-113 to Leu-133, and Phe-178 to Leu-198. His-83 and His-97 together coordinate heme b. Residues His-182 and His-196 each contribute to the heme b site. A ubiquinone is bound at residue His-201. A run of 4 helical transmembrane segments spans residues Tyr-226 to Tyr-246, Leu-288 to His-308, Ala-320 to Gly-340, and Tyr-347 to Pro-367.

Belongs to the cytochrome b family. As to quaternary structure, the cytochrome bc1 complex contains 3 respiratory subunits (MT-CYB, CYC1 and UQCRFS1), 2 core proteins (UQCRC1 and UQCRC2) and probably 6 low-molecular weight proteins. The cofactor is heme b.

It localises to the mitochondrion inner membrane. Functionally, component of the ubiquinol-cytochrome c reductase complex (complex III or cytochrome b-c1 complex) that is part of the mitochondrial respiratory chain. The b-c1 complex mediates electron transfer from ubiquinol to cytochrome c. Contributes to the generation of a proton gradient across the mitochondrial membrane that is then used for ATP synthesis. The sequence is that of Cytochrome b (mt-cyb) from Anguilla interioris (Highlands long-finned eel).